A 485-amino-acid polypeptide reads, in one-letter code: MELWKRSIKELKELIEKKEVKPSEVIESFAQRTKDVEVKIKSYVTDLTEQAVERAKQLDEKISDLSEIPELFGIPIAIKDNISTEGIRTTCSSKILENYVPPFDATVIKRLKDKEYVITGKTNLDEFAMGSSTENSAFFVTRNPWDLDRVPGGSSGGSAAAVSAGLAPAALGSDTGGSIRQPAAFCGVIGLKPTYGRVSRYGLVAFASSLDQIGTFTRTVEDTAILLNIISGKDPKDSTSADREVPDFTKFLDKDIKGIKIGIPEEFFVEGLDSQIKELVMESAKLLEKEGAELVSISMPTTKYAIEAYYIIAPSEASSNLARYDGVRYGFRASDYSDLEEMYSKTRDEGFGAEVKRRIMLGTYSLSSGYYDAYYLKAQKVRTLIYQDFMKAFESVDIILTPTTPDVAFRIGEKVDDPLQMYLSDIFTVSVNMAGVPGMSIPCGFKDGLPVGMQLIGKPFDEGTIIQVADRFTKLKDFSKDFPQL.

Active-site charge relay system residues include lysine 79 and serine 154. Serine 178 functions as the Acyl-ester intermediate in the catalytic mechanism.

The protein belongs to the amidase family. GatA subfamily. Heterotrimer of A, B and C subunits.

The enzyme catalyses L-glutamyl-tRNA(Gln) + L-glutamine + ATP + H2O = L-glutaminyl-tRNA(Gln) + L-glutamate + ADP + phosphate + H(+). Functionally, allows the formation of correctly charged Gln-tRNA(Gln) through the transamidation of misacylated Glu-tRNA(Gln) in organisms which lack glutaminyl-tRNA synthetase. The reaction takes place in the presence of glutamine and ATP through an activated gamma-phospho-Glu-tRNA(Gln). The chain is Glutamyl-tRNA(Gln) amidotransferase subunit A from Persephonella marina (strain DSM 14350 / EX-H1).